We begin with the raw amino-acid sequence, 488 residues long: Galactose-1-phosphate uridylyltransferase (488 aa).

This sequence belongs to the galactose-1-phosphate uridylyltransferase type 2 family.

The protein resides in the cytoplasm. The enzyme catalyses alpha-D-galactose 1-phosphate + UDP-alpha-D-glucose = alpha-D-glucose 1-phosphate + UDP-alpha-D-galactose. The protein operates within carbohydrate metabolism; galactose metabolism. This chain is Galactose-1-phosphate uridylyltransferase (galT), found in Lactobacillus helveticus (Lactobacillus suntoryeus).